The chain runs to 304 residues: 2-oxoacid:ferredoxin oxidoreductase 2, subunit beta (304 aa).

Residues Cys-12, Cys-15, and Cys-46 each contribute to the [4Fe-4S] cluster site. Thiamine diphosphate-binding positions include 44-47 and His-65; that span reads IGCS. Asp-90 lines the Mg(2+) pocket. 91 to 92 contacts thiamine diphosphate; sequence GD. Residues Asn-118 and Val-120 each coordinate Mg(2+). 122 to 123 contributes to the thiamine diphosphate binding site; the sequence is GL. Cys-197 contributes to the [4Fe-4S] cluster binding site.

Heterodimer composed of an alpha and a beta subunit. It depends on [4Fe-4S] cluster as a cofactor. Thiamine diphosphate is required as a cofactor. Requires Mg(2+) as cofactor.

The catalysed reaction is a 2-oxocarboxylate + 2 oxidized [2Fe-2S]-[ferredoxin] + CoA = an acyl-CoA + 2 reduced [2Fe-2S]-[ferredoxin] + CO2 + H(+). Its function is as follows. Catalyzes the coenzyme A-dependent oxidative decarboxylation of different 2-oxoacids such as 2-oxoglutarate, pyruvate and 2-oxobutyrate to form their CoA derivatives. This is 2-oxoacid:ferredoxin oxidoreductase 2, subunit beta from Sulfurisphaera tokodaii (strain DSM 16993 / JCM 10545 / NBRC 100140 / 7) (Sulfolobus tokodaii).